Consider the following 95-residue polypeptide: Co-chaperonin GroES (95 aa).

It belongs to the GroES chaperonin family. Heptamer of 7 subunits arranged in a ring. Interacts with the chaperonin GroEL.

Its subcellular location is the cytoplasm. In terms of biological role, together with the chaperonin GroEL, plays an essential role in assisting protein folding. The GroEL-GroES system forms a nano-cage that allows encapsulation of the non-native substrate proteins and provides a physical environment optimized to promote and accelerate protein folding. GroES binds to the apical surface of the GroEL ring, thereby capping the opening of the GroEL channel. This chain is Co-chaperonin GroES, found in Francisella philomiragia subsp. philomiragia (strain ATCC 25017 / CCUG 19701 / FSC 153 / O#319-036).